A 641-amino-acid chain; its full sequence is Fructose-1,6-bisphosphatase class 3 (641 aa).

This sequence belongs to the FBPase class 3 family. Requires Mn(2+) as cofactor.

It catalyses the reaction beta-D-fructose 1,6-bisphosphate + H2O = beta-D-fructose 6-phosphate + phosphate. Its pathway is carbohydrate biosynthesis; gluconeogenesis. The polypeptide is Fructose-1,6-bisphosphatase class 3 (Ligilactobacillus salivarius (strain UCC118) (Lactobacillus salivarius)).